The following is an 853-amino-acid chain: Rod cGMP-specific 3',5'-cyclic phosphodiesterase subunit beta (853 aa).

An N-acetylserine modification is found at serine 2. 2 GAF domains span residues 71 to 220 and 252 to 429; these read NMER…TLNL and DIER…GWSV. The 334-residue stretch at 481–814 folds into the PDEase domain; sequence EEDELGKILK…KEWKALADEY (334 aa). The Proton donor role is filled by histidine 557. 4 residues coordinate a divalent metal cation: histidine 561, histidine 597, aspartate 598, and aspartate 718. Cysteine 850 carries the post-translational modification Cysteine methyl ester. Cysteine 850 is lipidated: S-geranylgeranyl cysteine. Positions 851-853 are cleaved as a propeptide — removed in mature form; that stretch reads RIL.

This sequence belongs to the cyclic nucleotide phosphodiesterase family. As to quaternary structure, oligomer composed of two catalytic chains (alpha and beta), an inhibitory chain (gamma) and the delta chain. It depends on a divalent metal cation as a cofactor.

Its subcellular location is the membrane. The protein resides in the cell projection. It is found in the cilium. The protein localises to the photoreceptor outer segment. The enzyme catalyses 3',5'-cyclic GMP + H2O = GMP + H(+). Functionally, necessary for the formation of a functional phosphodiesterase holoenzyme. Involved in retinal circadian rhythm photoentrainment via modulation of UVA and orange light-induced phase-shift of the retina clock. May participate in processes of transmission and amplification of the visual signal. Its function is as follows. Rod-specific cGMP phosphodiesterase that catalyzes the hydrolysis of 3',5'-cyclic GMP. Necessary for the formation of a functional phosphodiesterase holoenzyme. Involved in retinal circadian rhythm photoentrainment via modulation of UVA and orange light-induced phase-shift of the retina clock. May participate in processes of transmission and amplification of the visual signal. This Bos taurus (Bovine) protein is Rod cGMP-specific 3',5'-cyclic phosphodiesterase subunit beta (PDE6B).